A 221-amino-acid polypeptide reads, in one-letter code: 2,3-bisphosphoglycerate-dependent phosphoglycerate mutase (221 aa).

Residues 8–15 (RHGNSLWN), 21–22 (TG), arginine 60, 87–90 (ERHY), lysine 98, 114–115 (RR), and 174–175 (GN) each bind substrate. The active-site Tele-phosphohistidine intermediate is the histidine 9. The active-site Proton donor/acceptor is glutamate 87. Residues 114–140 (RRGYDTPPPPLHSQADDPRYEEPPPLS) form a disordered region.

This sequence belongs to the phosphoglycerate mutase family. BPG-dependent PGAM subfamily.

It carries out the reaction (2R)-2-phosphoglycerate = (2R)-3-phosphoglycerate. It participates in carbohydrate degradation; glycolysis; pyruvate from D-glyceraldehyde 3-phosphate: step 3/5. Its function is as follows. Catalyzes the interconversion of 2-phosphoglycerate and 3-phosphoglycerate. In Tropheryma whipplei (strain TW08/27) (Whipple's bacillus), this protein is 2,3-bisphosphoglycerate-dependent phosphoglycerate mutase.